An 86-amino-acid polypeptide reads, in one-letter code: uncharacterized protein (86 aa).

Positions 1 to 31 (MKQKLLLSGLAVSTVGITSYLLKDPSNRQKA) are cleaved as a signal peptide. Positions 46–69 (PDMETFPVDKAGHPDPQDIEDNKM) are disordered. Positions 55 to 69 (KAGHPDPQDIEDNKM) are enriched in basic and acidic residues.

This is an uncharacterized protein from Bacillus subtilis (strain 168).